A 156-amino-acid chain; its full sequence is Crossover junction endodeoxyribonuclease RuvC (156 aa).

Catalysis depends on residues Asp-7, Glu-66, and Asp-138. Mg(2+)-binding residues include Asp-7, Glu-66, and Asp-138.

This sequence belongs to the RuvC family. Homodimer which binds Holliday junction (HJ) DNA. The HJ becomes 2-fold symmetrical on binding to RuvC with unstacked arms; it has a different conformation from HJ DNA in complex with RuvA. In the full resolvosome a probable DNA-RuvA(4)-RuvB(12)-RuvC(2) complex forms which resolves the HJ. The cofactor is Mg(2+).

The protein localises to the cytoplasm. The catalysed reaction is Endonucleolytic cleavage at a junction such as a reciprocal single-stranded crossover between two homologous DNA duplexes (Holliday junction).. In terms of biological role, the RuvA-RuvB-RuvC complex processes Holliday junction (HJ) DNA during genetic recombination and DNA repair. Endonuclease that resolves HJ intermediates. Cleaves cruciform DNA by making single-stranded nicks across the HJ at symmetrical positions within the homologous arms, yielding a 5'-phosphate and a 3'-hydroxyl group; requires a central core of homology in the junction. The consensus cleavage sequence is 5'-(A/T)TT(C/G)-3'. Cleavage occurs on the 3'-side of the TT dinucleotide at the point of strand exchange. HJ branch migration catalyzed by RuvA-RuvB allows RuvC to scan DNA until it finds its consensus sequence, where it cleaves and resolves the cruciform DNA. This is Crossover junction endodeoxyribonuclease RuvC from Ehrlichia chaffeensis (strain ATCC CRL-10679 / Arkansas).